Here is a 347-residue protein sequence, read N- to C-terminus: Virulence plasmid protein pGP2-D (347 aa).

This is Virulence plasmid protein pGP2-D from Chlamydia psittaci (Chlamydophila psittaci).